Here is a 445-residue protein sequence, read N- to C-terminus: 3-phosphoshikimate 1-carboxyvinyltransferase (445 aa).

The disordered stretch occupies residues 1-24 (MEHAATLPQTSRRPATPLTGTITV). The segment covering 7–22 (LPQTSRRPATPLTGTI) has biased composition (polar residues). The 3-phosphoshikimate site is built by Lys-28, Ser-29, and Arg-33. Phosphoenolpyruvate is bound at residue Lys-28. Gly-101 and Arg-129 together coordinate phosphoenolpyruvate. The 3-phosphoshikimate site is built by Ser-174, Gln-176, Asp-326, and Lys-353. Residue Gln-176 participates in phosphoenolpyruvate binding. Asp-326 functions as the Proton acceptor in the catalytic mechanism. Phosphoenolpyruvate is bound by residues Arg-357 and Arg-399.

It belongs to the EPSP synthase family. As to quaternary structure, monomer.

It is found in the cytoplasm. It carries out the reaction 3-phosphoshikimate + phosphoenolpyruvate = 5-O-(1-carboxyvinyl)-3-phosphoshikimate + phosphate. Its pathway is metabolic intermediate biosynthesis; chorismate biosynthesis; chorismate from D-erythrose 4-phosphate and phosphoenolpyruvate: step 6/7. Catalyzes the transfer of the enolpyruvyl moiety of phosphoenolpyruvate (PEP) to the 5-hydroxyl of shikimate-3-phosphate (S3P) to produce enolpyruvyl shikimate-3-phosphate and inorganic phosphate. This Acidiphilium cryptum (strain JF-5) protein is 3-phosphoshikimate 1-carboxyvinyltransferase.